The chain runs to 75 residues: Dermaseptin-SP5 (75 aa).

The N-terminal stretch at 1–22 is a signal peptide; that stretch reads MAFLKKSLFLVLFLGLVSLSMC. The propeptide occupies 23-45; the sequence is EEEKRENEVEEEQEDDEQSELRR. The segment at 26 to 46 is disordered; the sequence is KRENEVEEEQEDDEQSELRRS. Positions 30–40 are enriched in acidic residues; the sequence is EVEEEQEDDEQ. Proline 72 is subject to Proline amide. Residues 74–75 constitute a propeptide that is removed on maturation; that stretch reads EQ.

It belongs to the frog skin active peptide (FSAP) family. Dermaseptin subfamily. As to expression, expressed by the skin glands.

It is found in the secreted. It localises to the target cell membrane. Its function is as follows. Antimicrobial peptide with weak activity against Gram-positive and Gram-negative bacteria and fungi. Has been tested against E.coli (MIC=96.06-256 uM), S.aureus (MIC&gt;192.12 uM), K.pneumoniae (MIC&gt;189.00 uM) and C.albicans (MIC=384.24-1024 uM). Probably acts by disturbing membrane functions with its alpha-helical amphipathic structure. May penetrate bacterial membranes, but stay at the mammalian membrane surface. Does not show hemolytic activity. Does not interact at all with cardiolipin. The protein is Dermaseptin-SP5 of Agalychnis spurrelli (Gliding leaf frog).